A 91-amino-acid chain; its full sequence is DNA-directed RNA polymerase subunit Rpo11 (91 aa).

Belongs to the archaeal Rpo11/eukaryotic RPB11/RPC19 RNA polymerase subunit family. Part of the RNA polymerase complex.

It is found in the cytoplasm. It catalyses the reaction RNA(n) + a ribonucleoside 5'-triphosphate = RNA(n+1) + diphosphate. Functionally, DNA-dependent RNA polymerase (RNAP) catalyzes the transcription of DNA into RNA using the four ribonucleoside triphosphates as substrates. This chain is DNA-directed RNA polymerase subunit Rpo11, found in Methanothrix thermoacetophila (strain DSM 6194 / JCM 14653 / NBRC 101360 / PT) (Methanosaeta thermophila).